Reading from the N-terminus, the 644-residue chain is Macrolide export ATP-binding/permease protein MacB (644 aa).

Residues M1–S268 are Cytoplasmic-facing. The 239-residue stretch at I4–R242 folds into the ABC transporter domain. G40 to S47 is an ATP binding site. Residues L269–G289 form a helical membrane-spanning segment. Residues N290–S523 lie on the Periplasmic side of the membrane. Residues I524 to V544 form a helical membrane-spanning segment. The Cytoplasmic portion of the chain corresponds to T545–V573. A helical transmembrane segment spans residues L574–F594. Over N595–T607 the chain is Periplasmic. A helical membrane pass occupies residues A608–P628. At A629–E644 the chain is on the cytoplasmic side.

It belongs to the ABC transporter superfamily. Macrolide exporter (TC 3.A.1.122) family. As to quaternary structure, homodimer. Part of the tripartite efflux system MacAB-TdeA, which is composed of an inner membrane transporter, MacB, a periplasmic membrane fusion protein, MacA, and an outer membrane component, TdeA. The complex forms a large protein conduit and can translocate molecules across both the inner and outer membranes. Interacts with MacA.

It localises to the cell inner membrane. In terms of biological role, part of the tripartite efflux system MacAB-TdeA. MacB is a non-canonical ABC transporter that contains transmembrane domains (TMD), which form a pore in the inner membrane, and an ATP-binding domain (NBD), which is responsible for energy generation. Confers resistance against macrolides. In Aggregatibacter actinomycetemcomitans (Actinobacillus actinomycetemcomitans), this protein is Macrolide export ATP-binding/permease protein MacB.